The following is a 370-amino-acid chain: Phosphoserine aminotransferase (370 aa).

Arg-38 serves as a coordination point for L-glutamate. Residues Trp-101, Thr-143, Asp-166, and Gln-189 each contribute to the pyridoxal 5'-phosphate site. Lys-190 bears the N6-(pyridoxal phosphate)lysine mark. Residue 243-244 (NT) coordinates pyridoxal 5'-phosphate.

It belongs to the class-V pyridoxal-phosphate-dependent aminotransferase family. SerC subfamily. Homodimer. Requires pyridoxal 5'-phosphate as cofactor.

The protein localises to the cytoplasm. The catalysed reaction is O-phospho-L-serine + 2-oxoglutarate = 3-phosphooxypyruvate + L-glutamate. It catalyses the reaction 4-(phosphooxy)-L-threonine + 2-oxoglutarate = (R)-3-hydroxy-2-oxo-4-phosphooxybutanoate + L-glutamate. Its pathway is amino-acid biosynthesis; L-serine biosynthesis; L-serine from 3-phospho-D-glycerate: step 2/3. The protein operates within cofactor biosynthesis; pyridoxine 5'-phosphate biosynthesis; pyridoxine 5'-phosphate from D-erythrose 4-phosphate: step 3/5. In terms of biological role, catalyzes the reversible conversion of 3-phosphohydroxypyruvate to phosphoserine and of 3-hydroxy-2-oxo-4-phosphonooxybutanoate to phosphohydroxythreonine. The protein is Phosphoserine aminotransferase of Methanosarcina mazei (strain ATCC BAA-159 / DSM 3647 / Goe1 / Go1 / JCM 11833 / OCM 88) (Methanosarcina frisia).